The sequence spans 506 residues: Maturase K (506 aa).

It belongs to the intron maturase 2 family. MatK subfamily.

The protein resides in the plastid. It is found in the chloroplast. Its function is as follows. Usually encoded in the trnK tRNA gene intron. Probably assists in splicing its own and other chloroplast group II introns. This chain is Maturase K, found in Uncarina grandidieri (Mouse trap tree).